A 396-amino-acid polypeptide reads, in one-letter code: NADH-quinone oxidoreductase subunit D (396 aa).

The protein belongs to the complex I 49 kDa subunit family. As to quaternary structure, NDH-1 is composed of 14 different subunits. Subunits NuoB, C, D, E, F, and G constitute the peripheral sector of the complex.

Its subcellular location is the cell inner membrane. The catalysed reaction is a quinone + NADH + 5 H(+)(in) = a quinol + NAD(+) + 4 H(+)(out). Its function is as follows. NDH-1 shuttles electrons from NADH, via FMN and iron-sulfur (Fe-S) centers, to quinones in the respiratory chain. The immediate electron acceptor for the enzyme in this species is believed to be ubiquinone. Couples the redox reaction to proton translocation (for every two electrons transferred, four hydrogen ions are translocated across the cytoplasmic membrane), and thus conserves the redox energy in a proton gradient. The polypeptide is NADH-quinone oxidoreductase subunit D (Bartonella bacilliformis (strain ATCC 35685 / KC583 / Herrer 020/F12,63)).